The following is a 101-amino-acid chain: Small ribosomal subunit protein uS14 (101 aa).

The protein belongs to the universal ribosomal protein uS14 family. In terms of assembly, part of the 30S ribosomal subunit. Contacts proteins S3 and S10.

In terms of biological role, binds 16S rRNA, required for the assembly of 30S particles and may also be responsible for determining the conformation of the 16S rRNA at the A site. This is Small ribosomal subunit protein uS14 from Synechococcus sp. (strain JA-3-3Ab) (Cyanobacteria bacterium Yellowstone A-Prime).